We begin with the raw amino-acid sequence, 244 residues long: 7-cyano-7-deazaguanine synthase (244 aa).

Position 14 to 24 (14 to 24 (FSGGQDSATCV)) interacts with ATP. Zn(2+)-binding residues include cysteine 202, cysteine 217, cysteine 220, and cysteine 223.

The protein belongs to the QueC family. It depends on Zn(2+) as a cofactor.

It catalyses the reaction 7-carboxy-7-deazaguanine + NH4(+) + ATP = 7-cyano-7-deazaguanine + ADP + phosphate + H2O + H(+). The protein operates within purine metabolism; 7-cyano-7-deazaguanine biosynthesis. Catalyzes the ATP-dependent conversion of 7-carboxy-7-deazaguanine (CDG) to 7-cyano-7-deazaguanine (preQ(0)). This chain is 7-cyano-7-deazaguanine synthase, found in Burkholderia ambifaria (strain MC40-6).